The chain runs to 239 residues: Ribonuclease 3 (239 aa).

An RNase III domain is found at 12–137; that stretch reads ISRLEALIGY…LIATLYLDGG (126 aa). Glu50 is a binding site for Mg(2+). Residue Asp54 is part of the active site. 2 residues coordinate Mg(2+): Asp123 and Glu126. Glu126 is an active-site residue. The 70-residue stretch at 162–231 folds into the DRBM domain; that stretch reads DAKTELQEWA…ATRLLEREGV (70 aa).

It belongs to the ribonuclease III family. Homodimer. The cofactor is Mg(2+).

It localises to the cytoplasm. The enzyme catalyses Endonucleolytic cleavage to 5'-phosphomonoester.. Digests double-stranded RNA. Involved in the processing of primary rRNA transcript to yield the immediate precursors to the large and small rRNAs (23S and 16S). Processes some mRNAs, and tRNAs when they are encoded in the rRNA operon. Processes pre-crRNA and tracrRNA of type II CRISPR loci if present in the organism. The polypeptide is Ribonuclease 3 (Agrobacterium fabrum (strain C58 / ATCC 33970) (Agrobacterium tumefaciens (strain C58))).